A 464-amino-acid chain; its full sequence is Trigger factor (464 aa).

The 82-residue stretch at 162–243 (GDFVSIDLSA…VKSVKERELP (82 aa)) folds into the PPIase FKBP-type domain. Residues 431-464 (IDTSEFFGKRPSGDGAADEDADQADESTTADAGE) form a disordered region. A compositionally biased stretch (acidic residues) spans 446 to 455 (AADEDADQAD).

This sequence belongs to the FKBP-type PPIase family. Tig subfamily.

It is found in the cytoplasm. The catalysed reaction is [protein]-peptidylproline (omega=180) = [protein]-peptidylproline (omega=0). In terms of biological role, involved in protein export. Acts as a chaperone by maintaining the newly synthesized protein in an open conformation. Functions as a peptidyl-prolyl cis-trans isomerase. The sequence is that of Trigger factor from Mycobacterium avium (strain 104).